A 411-amino-acid polypeptide reads, in one-letter code: Probable tRNA pseudouridine synthase D (411 aa).

The active-site Nucleophile is Asp79. Positions 150–369 (GFPNYFGQQR…STGDRRIVSA (220 aa)) constitute a TRUD domain.

It belongs to the pseudouridine synthase TruD family.

The catalysed reaction is uridine(13) in tRNA = pseudouridine(13) in tRNA. Its function is as follows. Could be responsible for synthesis of pseudouridine from uracil-13 in transfer RNAs. The chain is Probable tRNA pseudouridine synthase D from Thermoplasma acidophilum (strain ATCC 25905 / DSM 1728 / JCM 9062 / NBRC 15155 / AMRC-C165).